A 342-amino-acid polypeptide reads, in one-letter code: S-adenosylmethionine:tRNA ribosyltransferase-isomerase (342 aa).

The protein belongs to the QueA family. In terms of assembly, monomer.

Its subcellular location is the cytoplasm. The catalysed reaction is 7-aminomethyl-7-carbaguanosine(34) in tRNA + S-adenosyl-L-methionine = epoxyqueuosine(34) in tRNA + adenine + L-methionine + 2 H(+). Its pathway is tRNA modification; tRNA-queuosine biosynthesis. Its function is as follows. Transfers and isomerizes the ribose moiety from AdoMet to the 7-aminomethyl group of 7-deazaguanine (preQ1-tRNA) to give epoxyqueuosine (oQ-tRNA). This Streptococcus pyogenes serotype M49 (strain NZ131) protein is S-adenosylmethionine:tRNA ribosyltransferase-isomerase.